Here is a 150-residue protein sequence, read N- to C-terminus: MSDSVELFTDGACKGNPGPGGWGALLVCKGVEKELWGGEANTTNNRMELTGAIRGLEELKRPCEVTLVTDSQYVMKGITEWMVNWKKRGWKTAAKEPVKNADLWQLLDEQVSRHTVKWQWVRGHIGHPGNERADQLANRGVDEVRGIKRA.

In terms of domain architecture, RNase H type-1 spans M1–D142. Mg(2+) contacts are provided by D10, E48, D70, and D134.

Belongs to the RNase H family. Monomer. It depends on Mg(2+) as a cofactor.

It localises to the cytoplasm. The catalysed reaction is Endonucleolytic cleavage to 5'-phosphomonoester.. Functionally, endonuclease that specifically degrades the RNA of RNA-DNA hybrids. This is Ribonuclease HI from Pseudomonas syringae pv. tomato (strain ATCC BAA-871 / DC3000).